Consider the following 201-residue polypeptide: MSVYSPRLRELVEGLRRLPGVGAKTAQRMALHLLQRDRDGARQLADALQRAVDGVGHCPECGLLTEEERCGLCASPQRRRTLLCVVESSADVFALEQATDFQGLYFVLGGALSPLDGIGPEELGLDRLQQRLEAGEVEEIILATNPTIEGEATAHYVQSLAAERGVRTTRIAHGVPMGGALEQVDQGTLSHAFMGRRDYEG.

The C4-type zinc-finger motif lies at 58–73; sequence CPECGLLTEEERCGLC. In terms of domain architecture, Toprim spans 81–176; the sequence is TLLCVVESSA…RTTRIAHGVP (96 aa).

Belongs to the RecR family.

Functionally, may play a role in DNA repair. It seems to be involved in an RecBC-independent recombinational process of DNA repair. It may act with RecF and RecO. The sequence is that of Recombination protein RecR from Halorhodospira halophila (strain DSM 244 / SL1) (Ectothiorhodospira halophila (strain DSM 244 / SL1)).